Reading from the N-terminus, the 430-residue chain is Serine hydroxymethyltransferase (430 aa).

(6S)-5,6,7,8-tetrahydrofolate-binding positions include Leu-123 and 127-129; that span reads GHL. The residue at position 232 (Lys-232) is an N6-(pyridoxal phosphate)lysine. Glu-248 contributes to the (6S)-5,6,7,8-tetrahydrofolate binding site.

It belongs to the SHMT family. As to quaternary structure, homodimer. The cofactor is pyridoxal 5'-phosphate.

The protein resides in the cytoplasm. The enzyme catalyses (6R)-5,10-methylene-5,6,7,8-tetrahydrofolate + glycine + H2O = (6S)-5,6,7,8-tetrahydrofolate + L-serine. Its pathway is one-carbon metabolism; tetrahydrofolate interconversion. It functions in the pathway amino-acid biosynthesis; glycine biosynthesis; glycine from L-serine: step 1/1. Catalyzes the reversible interconversion of serine and glycine with tetrahydrofolate (THF) serving as the one-carbon carrier. This reaction serves as the major source of one-carbon groups required for the biosynthesis of purines, thymidylate, methionine, and other important biomolecules. Also exhibits THF-independent aldolase activity toward beta-hydroxyamino acids, producing glycine and aldehydes, via a retro-aldol mechanism. This chain is Serine hydroxymethyltransferase, found in Anaplasma marginale (strain Florida).